A 105-amino-acid polypeptide reads, in one-letter code: Small ribosomal subunit protein uS10 (105 aa).

Belongs to the universal ribosomal protein uS10 family. In terms of assembly, part of the 30S ribosomal subunit.

In terms of biological role, involved in the binding of tRNA to the ribosomes. The polypeptide is Small ribosomal subunit protein uS10 (Rickettsia bellii (strain OSU 85-389)).